A 707-amino-acid polypeptide reads, in one-letter code: Trans-feruloyl-CoA synthase FCS1 (707 aa).

ATP contacts are provided by residues His-267 and 524–535 (ARAIGYPVVMKA). The ATP-grasp domain occupies 498–549 (KELLRPLGIAFPPSQFAANAEAAAAAARAIGYPVVMKAQAAALGHKSDAGGV).

The protein in the N-terminal section; belongs to the acetate CoA ligase alpha subunit family. This sequence in the C-terminal section; belongs to the acetate CoA ligase beta subunit family. Homodimer.

The enzyme catalyses (E)-ferulate + ATP + CoA = (E)-feruloyl-CoA + ADP + phosphate. Its function is as follows. Catalyzes the formation of feruloyl-CoA, ADP and phosphate from ferulate, CoA and ATP. This Unknown prokaryotic organism protein is Trans-feruloyl-CoA synthase FCS1.